Here is a 488-residue protein sequence, read N- to C-terminus: Lysine--tRNA ligase (488 aa).

Glutamate 397 and glutamate 404 together coordinate Mg(2+).

Belongs to the class-II aminoacyl-tRNA synthetase family. Homodimer. Mg(2+) is required as a cofactor.

It is found in the cytoplasm. The catalysed reaction is tRNA(Lys) + L-lysine + ATP = L-lysyl-tRNA(Lys) + AMP + diphosphate. The sequence is that of Lysine--tRNA ligase (lysS) from Mycoplasmopsis fermentans (strain ATCC 19989 / NBRC 14854 / NCTC 10117 / PG18) (Mycoplasma fermentans).